Here is a 602-residue protein sequence, read N- to C-terminus: Oligoendopeptidase F, chromosomal (602 aa).

A Zn(2+)-binding site is contributed by H388. E389 is a catalytic residue. Zn(2+) is bound by residues H392 and H395.

It belongs to the peptidase M3B family. It depends on Zn(2+) as a cofactor.

In terms of biological role, hydrolyzes peptides containing between 7 and 17 amino acids with a rather wide specificity. The sequence is that of Oligoendopeptidase F, chromosomal (pepF2) from Lactococcus lactis subsp. cremoris (Streptococcus cremoris).